Reading from the N-terminus, the 849-residue chain is Formin-like protein 4 (849 aa).

An N-terminal signal peptide occupies residues methionine 1–alanine 22. The segment at isoleucine 36–threonine 104 is disordered. The span at tryptophan 38 to proline 52 shows a compositional bias: pro residues. A compositionally biased stretch (low complexity) spans aspartate 53 to proline 64. The chain crosses the membrane as a helical span at residues isoleucine 109 to phenylalanine 129. The span at alanine 185 to aspartate 194 shows a compositional bias: basic and acidic residues. The interval alanine 185–alanine 364 is disordered. The segment covering glycine 234 to threonine 246 has biased composition (gly residues). Residues tryptophan 247–alanine 279 are compositionally biased toward low complexity. 3 stretches are compositionally biased toward pro residues: residues alanine 280–proline 297, proline 324–serine 339, and proline 346–glycine 360. The FH2 domain occupies glutamate 406–alanine 823.

This sequence belongs to the formin-like family. Class-I subfamily.

It localises to the membrane. This is Formin-like protein 4 (FH4) from Oryza sativa subsp. japonica (Rice).